The chain runs to 152 residues: Sec-independent protein translocase protein TatB (152 aa).

A helical membrane pass occupies residues methionine 1–glycine 21.

This sequence belongs to the TatB family. The Tat system comprises two distinct complexes: a TatABC complex, containing multiple copies of TatA, TatB and TatC subunits, and a separate TatA complex, containing only TatA subunits. Substrates initially bind to the TatABC complex, which probably triggers association of the separate TatA complex to form the active translocon.

It localises to the cell inner membrane. Its function is as follows. Part of the twin-arginine translocation (Tat) system that transports large folded proteins containing a characteristic twin-arginine motif in their signal peptide across membranes. Together with TatC, TatB is part of a receptor directly interacting with Tat signal peptides. TatB may form an oligomeric binding site that transiently accommodates folded Tat precursor proteins before their translocation. This is Sec-independent protein translocase protein TatB from Ruegeria pomeroyi (strain ATCC 700808 / DSM 15171 / DSS-3) (Silicibacter pomeroyi).